The primary structure comprises 447 residues: Tubulin beta-4 chain (447 aa).

Residues Gln11, Glu71, Ser140, Gly144, Thr145, Gly146, Asn206, and Asn228 each coordinate GTP. Residue Glu71 participates in Mg(2+) binding. Residues 428-447 (QDATAEEYEEEEHDGEEEHA) are disordered. Positions 431-447 (TAEEYEEEEHDGEEEHA) are enriched in acidic residues.

It belongs to the tubulin family. Dimer of alpha and beta chains. A typical microtubule is a hollow water-filled tube with an outer diameter of 25 nm and an inner diameter of 15 nM. Alpha-beta heterodimers associate head-to-tail to form protofilaments running lengthwise along the microtubule wall with the beta-tubulin subunit facing the microtubule plus end conferring a structural polarity. Microtubules usually have 13 protofilaments but different protofilament numbers can be found in some organisms and specialized cells. Mg(2+) is required as a cofactor.

The protein resides in the cytoplasm. Its subcellular location is the cytoskeleton. Functionally, tubulin is the major constituent of microtubules, a cylinder consisting of laterally associated linear protofilaments composed of alpha- and beta-tubulin heterodimers. Microtubules grow by the addition of GTP-tubulin dimers to the microtubule end, where a stabilizing cap forms. Below the cap, tubulin dimers are in GDP-bound state, owing to GTPase activity of alpha-tubulin. The protein is Tubulin beta-4 chain (TUBB4) of Zea mays (Maize).